The sequence spans 701 residues: Elongation factor G (701 aa).

Residues 8–291 (GRYRNIGIVA…AVIDYLPAPT (284 aa)) enclose the tr-type G domain. Residues 17–24 (AHVDAGKT), 89–93 (DTPGH), and 143–146 (NKMD) contribute to the GTP site.

Belongs to the TRAFAC class translation factor GTPase superfamily. Classic translation factor GTPase family. EF-G/EF-2 subfamily.

The protein resides in the cytoplasm. In terms of biological role, catalyzes the GTP-dependent ribosomal translocation step during translation elongation. During this step, the ribosome changes from the pre-translocational (PRE) to the post-translocational (POST) state as the newly formed A-site-bound peptidyl-tRNA and P-site-bound deacylated tRNA move to the P and E sites, respectively. Catalyzes the coordinated movement of the two tRNA molecules, the mRNA and conformational changes in the ribosome. The sequence is that of Elongation factor G from Pseudomonas syringae pv. syringae (strain B728a).